Reading from the N-terminus, the 57-residue chain is MAEVRLGENETIESALRRFKKKIQKAGILPEVRRREHYEKPSQRRKRKLEASRRRRR.

Positions 32–42 are enriched in basic and acidic residues; it reads VRRREHYEKPS. The disordered stretch occupies residues 32 to 57; it reads VRRREHYEKPSQRRKRKLEASRRRRR. Positions 43-57 are enriched in basic residues; sequence QRRKRKLEASRRRRR.

The protein belongs to the bacterial ribosomal protein bS21 family.

The chain is Small ribosomal subunit protein bS21 from Synechococcus elongatus (strain ATCC 33912 / PCC 7942 / FACHB-805) (Anacystis nidulans R2).